Consider the following 128-residue polypeptide: Glycine cleavage system H protein (128 aa).

In terms of domain architecture, Lipoyl-binding spans 23–105; it reads KVRIGITDFA…YEKAWMIVVE (83 aa). The residue at position 64 (Lys-64) is an N6-lipoyllysine.

The protein belongs to the GcvH family. The glycine cleavage system is composed of four proteins: P, T, L and H. (R)-lipoate serves as cofactor.

The glycine cleavage system catalyzes the degradation of glycine. The H protein shuttles the methylamine group of glycine from the P protein to the T protein. Functionally, is also involved in protein lipoylation via its role as an octanoyl/lipoyl carrier protein intermediate. This Halalkalibacterium halodurans (strain ATCC BAA-125 / DSM 18197 / FERM 7344 / JCM 9153 / C-125) (Bacillus halodurans) protein is Glycine cleavage system H protein.